The chain runs to 138 residues: Phosphoribosyl-AMP cyclohydrolase (138 aa).

Residue Asp-84 participates in Mg(2+) binding. Cys-85 contributes to the Zn(2+) binding site. The Mg(2+) site is built by Asp-86 and Asp-88. Residues Cys-102 and Cys-109 each contribute to the Zn(2+) site.

It belongs to the PRA-CH family. Homodimer. It depends on Mg(2+) as a cofactor. Requires Zn(2+) as cofactor.

It is found in the cytoplasm. The catalysed reaction is 1-(5-phospho-beta-D-ribosyl)-5'-AMP + H2O = 1-(5-phospho-beta-D-ribosyl)-5-[(5-phospho-beta-D-ribosylamino)methylideneamino]imidazole-4-carboxamide. It participates in amino-acid biosynthesis; L-histidine biosynthesis; L-histidine from 5-phospho-alpha-D-ribose 1-diphosphate: step 3/9. Catalyzes the hydrolysis of the adenine ring of phosphoribosyl-AMP. The chain is Phosphoribosyl-AMP cyclohydrolase from Burkholderia orbicola (strain MC0-3).